A 767-amino-acid chain; its full sequence is Protein SQS1 (767 aa).

A compositionally biased stretch (basic residues) spans 1–17; it reads MAKRHSHYQGSRRRHAR. Positions 1 to 60 are disordered; sequence MAKRHSHYQGSRRRHARGSNSKKAGRGNAKGIQGRKIKKKPTPTNSWHNSSIPLGEGDLD. The segment covering 42–52 has biased composition (polar residues); that stretch reads TPTNSWHNSSI. Ser-105 is modified (phosphoserine). Residues 176–185 show a composition bias toward acidic residues; sequence EDSENEDDDS. Residues 176-200 are disordered; the sequence is EDSENEDDDSQNSPSTDHSLSSNES. A phosphoserine mark is found at Ser-217, Ser-255, Ser-334, Ser-343, and Ser-345. Positions 466 to 493 are disordered; that stretch reads YSDIPISDSSDEGDSYEGDSYEDDEDMA. Over residues 474–492 the composition is skewed to acidic residues; it reads SSDEGDSYEGDSYEDDEDM. One can recognise an R3H domain in the interval 594-656; that stretch reads GLHIQNIKDE…HTSVVVEKIK (63 aa). Residues 720–767 enclose the G-patch domain; sequence NENIGRRMLEKLGWKSGEGLGIQGNKGISEPIFAKIKKNRSGLRHSES.

Belongs to the SQS1 family.

Its subcellular location is the cytoplasm. The protein localises to the nucleus. May be involved in splicing since overexpression antagonizes the suppression of splicing defects by SPP382 mutants. The chain is Protein SQS1 (SQS1) from Saccharomyces cerevisiae (strain YJM789) (Baker's yeast).